Here is a 356-residue protein sequence, read N- to C-terminus: 1-deoxy-D-xylulose 5-phosphate reductoisomerase (356 aa).

7 residues coordinate NADPH: Thr7, Gly8, Ser9, Ile10, Gly31, Asn33, and Asn111. A 1-deoxy-D-xylulose 5-phosphate-binding site is contributed by Lys112. NADPH is bound at residue Glu113. Asp131 serves as a coordination point for Mn(2+). 1-deoxy-D-xylulose 5-phosphate is bound by residues Ser132, Glu133, Ser155, and His178. Position 133 (Glu133) interacts with Mn(2+). Residue Gly184 coordinates NADPH. 1-deoxy-D-xylulose 5-phosphate contacts are provided by Ser191, Asn196, Lys197, and Glu200. Residue Glu200 coordinates Mn(2+).

It belongs to the DXR family. The cofactor is Mg(2+). Mn(2+) is required as a cofactor.

The catalysed reaction is 2-C-methyl-D-erythritol 4-phosphate + NADP(+) = 1-deoxy-D-xylulose 5-phosphate + NADPH + H(+). Its pathway is isoprenoid biosynthesis; isopentenyl diphosphate biosynthesis via DXP pathway; isopentenyl diphosphate from 1-deoxy-D-xylulose 5-phosphate: step 1/6. Functionally, catalyzes the NADPH-dependent rearrangement and reduction of 1-deoxy-D-xylulose-5-phosphate (DXP) to 2-C-methyl-D-erythritol 4-phosphate (MEP). The protein is 1-deoxy-D-xylulose 5-phosphate reductoisomerase of Campylobacter jejuni subsp. doylei (strain ATCC BAA-1458 / RM4099 / 269.97).